We begin with the raw amino-acid sequence, 187 residues long: UPF0215 protein PAE0952 (187 aa).

This sequence belongs to the UPF0215 family.

The polypeptide is UPF0215 protein PAE0952 (Pyrobaculum aerophilum (strain ATCC 51768 / DSM 7523 / JCM 9630 / CIP 104966 / NBRC 100827 / IM2)).